The sequence spans 279 residues: Oxygen-dependent coproporphyrinogen-III oxidase (279 aa).

Ser-102 provides a ligand contact to substrate. A divalent metal cation contacts are provided by His-106 and His-116. The active-site Proton donor is His-116. Substrate is bound at residue 118 to 120 (NTR). 2 residues coordinate a divalent metal cation: His-149 and His-179. The important for dimerization stretch occupies residues 244 to 279 (YVEFNLLYDRGTKFGLMTDGNVEAILMSLPPEVKFN).

The protein belongs to the aerobic coproporphyrinogen-III oxidase family. In terms of assembly, homodimer. A divalent metal cation is required as a cofactor.

The protein localises to the cytoplasm. The enzyme catalyses coproporphyrinogen III + O2 + 2 H(+) = protoporphyrinogen IX + 2 CO2 + 2 H2O. It functions in the pathway porphyrin-containing compound metabolism; protoporphyrin-IX biosynthesis; protoporphyrinogen-IX from coproporphyrinogen-III (O2 route): step 1/1. Its function is as follows. Involved in the heme biosynthesis. Catalyzes the aerobic oxidative decarboxylation of propionate groups of rings A and B of coproporphyrinogen-III to yield the vinyl groups in protoporphyrinogen-IX. The chain is Oxygen-dependent coproporphyrinogen-III oxidase from Rickettsia akari (strain Hartford).